Reading from the N-terminus, the 726-residue chain is Procollagen-lysine,2-oxoglutarate 5-dioxygenase 1 (726 aa).

The first 18 residues, 1–18 (MRLLLLLAPLGWLLLAET), serve as a signal peptide directing secretion. N196 and N537 each carry an N-linked (GlcNAc...) asparagine glycan. Residues 635 to 726 (QFDLAFVVRY…RYIAVSFVDP (92 aa)) form the Fe2OG dioxygenase domain. Positions 655 and 657 each coordinate Fe cation. The N-linked (GlcNAc...) asparagine glycan is linked to N685. Residue H707 participates in Fe cation binding. R717 is a catalytic residue.

In terms of assembly, homodimer. Identified in a complex with P3H3 and P3H4. It depends on Fe(2+) as a cofactor. Requires L-ascorbate as cofactor.

The protein localises to the rough endoplasmic reticulum membrane. The catalysed reaction is L-lysyl-[collagen] + 2-oxoglutarate + O2 = (5R)-5-hydroxy-L-lysyl-[collagen] + succinate + CO2. In terms of biological role, part of a complex composed of PLOD1, P3H3 and P3H4 that catalyzes hydroxylation of lysine residues in collagen alpha chains and is required for normal assembly and cross-linkling of collagen fibrils. Forms hydroxylysine residues in -Xaa-Lys-Gly- sequences in collagens. These hydroxylysines serve as sites of attachment for carbohydrate units and are essential for the stability of the intermolecular collagen cross-links. The sequence is that of Procollagen-lysine,2-oxoglutarate 5-dioxygenase 1 (PLOD1) from Bos taurus (Bovine).